The primary structure comprises 335 residues: tRNA-splicing endonuclease (335 aa).

Active-site residues include Y269, H280, and K311.

Belongs to the tRNA-intron endonuclease family. Archaeal long subfamily. In terms of assembly, homodimer.

It catalyses the reaction pretRNA = a 3'-half-tRNA molecule with a 5'-OH end + a 5'-half-tRNA molecule with a 2',3'-cyclic phosphate end + an intron with a 2',3'-cyclic phosphate and a 5'-hydroxyl terminus.. In terms of biological role, endonuclease that removes tRNA introns. Cleaves pre-tRNA at the 5'- and 3'-splice sites to release the intron. The products are an intron and two tRNA half-molecules bearing 2',3' cyclic phosphate and 5'-OH termini. Recognizes a pseudosymmetric substrate in which 2 bulged loops of 3 bases are separated by a stem of 4 bp. This chain is tRNA-splicing endonuclease, found in Haloarcula marismortui (strain ATCC 43049 / DSM 3752 / JCM 8966 / VKM B-1809) (Halobacterium marismortui).